A 130-amino-acid chain; its full sequence is MQQAGLTLMAVAVCVAFQTSEAILPMASSCCTEVSHHVSGRLLERVSSCSIQRADGDCDLAAVILHVKRRRICISPHNRTLKQWMRASEVKKNGRENVCSGKKQPSRKDRKGHTTRKHRTRGTHRHEASR.

Residues 1-16 (MQQAGLTLMAVAVCVA) form the signal peptide. Cystine bridges form between cysteine 30–cysteine 58 and cysteine 31–cysteine 73. N-linked (GlcNAc...) asparagine glycosylation is present at asparagine 78. A disordered region spans residues 92 to 130 (KNGRENVCSGKKQPSRKDRKGHTTRKHRTRGTHRHEASR). The segment covering 104–124 (QPSRKDRKGHTTRKHRTRGTH) has biased composition (basic residues).

It belongs to the intercrine beta (chemokine CC) family. In terms of tissue distribution, mainly expressed in testis, epithelial cells of normal colon, kidney, Peyer patches, lymph nodes. Also found in lower levels in brain, spleen and lung.

Its subcellular location is the secreted. In terms of biological role, chemotactic for resting CD4, CD8 T-cells and eosinophils. Binds to CCR10 and induces calcium mobilization in a dose-dependent manner. The sequence is that of C-C motif chemokine 28 (Ccl28) from Mus musculus (Mouse).